The primary structure comprises 224 residues: Casparian strip membrane protein 1 (224 aa).

The tract at residues M1–A22 is disordered. Over M1–C62 the chain is Cytoplasmic. A helical membrane pass occupies residues L63–I83. The Extracellular portion of the chain corresponds to S84 to A110. A helical membrane pass occupies residues F111–F131. The Cytoplasmic portion of the chain corresponds to S132–R145. A helical membrane pass occupies residues L146–A166. At A167–V200 the chain is on the extracellular side. The helical transmembrane segment at V201 to I221 threads the bilayer. The Cytoplasmic portion of the chain corresponds to R222–R224.

Belongs to the Casparian strip membrane proteins (CASP) family. In terms of assembly, homodimer and heterodimers.

The protein resides in the cell membrane. Its function is as follows. Regulates membrane-cell wall junctions and localized cell wall deposition. Required for establishment of the Casparian strip membrane domain (CSD) and the subsequent formation of Casparian strips, a cell wall modification of the root endodermis that determines an apoplastic barrier between the intraorganismal apoplasm and the extraorganismal apoplasm and prevents lateral diffusion. In Oryza sativa subsp. indica (Rice), this protein is Casparian strip membrane protein 1.